Consider the following 453-residue polypeptide: Elongation factor 1-alpha (453 aa).

Residues 5–230 (KTHINIVVIG…DAIVEPKRPH (226 aa)) form the tr-type G domain. Residues 14–21 (GHVDAGKS) are G1. 14-21 (GHVDAGKS) serves as a coordination point for GTP. A G2 region spans residues 70 to 74 (GITID). The interval 91–94 (DAPG) is G3. Residues 91–95 (DAPGH) and 153–156 (NKMD) contribute to the GTP site. Residues 153-156 (NKMD) form a G4 region. A G5 region spans residues 194–196 (SGW).

Belongs to the TRAFAC class translation factor GTPase superfamily. Classic translation factor GTPase family. EF-Tu/EF-1A subfamily. In terms of assembly, binds to actin.

The protein localises to the cytoplasm. This protein promotes the GTP-dependent binding of aminoacyl-tRNA to the A-site of ribosomes during protein biosynthesis. It is also an abundant actin filament bundling protein. The chain is Elongation factor 1-alpha (eef1a2) from Dictyostelium discoideum (Social amoeba).